Reading from the N-terminus, the 293-residue chain is 4-diphosphocytidyl-2-C-methyl-D-erythritol kinase (293 aa).

The active site involves K16. Residue 99–109 (PMGAGLGGGSS) coordinates ATP. D141 is a catalytic residue.

The protein belongs to the GHMP kinase family. IspE subfamily.

It catalyses the reaction 4-CDP-2-C-methyl-D-erythritol + ATP = 4-CDP-2-C-methyl-D-erythritol 2-phosphate + ADP + H(+). Its pathway is isoprenoid biosynthesis; isopentenyl diphosphate biosynthesis via DXP pathway; isopentenyl diphosphate from 1-deoxy-D-xylulose 5-phosphate: step 3/6. Catalyzes the phosphorylation of the position 2 hydroxy group of 4-diphosphocytidyl-2C-methyl-D-erythritol. This Burkholderia orbicola (strain MC0-3) protein is 4-diphosphocytidyl-2-C-methyl-D-erythritol kinase.